Consider the following 415-residue polypeptide: Gamma-glutamyl phosphate reductase (415 aa).

Belongs to the gamma-glutamyl phosphate reductase family.

Its subcellular location is the cytoplasm. It catalyses the reaction L-glutamate 5-semialdehyde + phosphate + NADP(+) = L-glutamyl 5-phosphate + NADPH + H(+). Its pathway is amino-acid biosynthesis; L-proline biosynthesis; L-glutamate 5-semialdehyde from L-glutamate: step 2/2. In terms of biological role, catalyzes the NADPH-dependent reduction of L-glutamate 5-phosphate into L-glutamate 5-semialdehyde and phosphate. The product spontaneously undergoes cyclization to form 1-pyrroline-5-carboxylate. The protein is Gamma-glutamyl phosphate reductase of Salmonella dublin (strain CT_02021853).